The sequence spans 343 residues: Phosphatidylglycerol--prolipoprotein diacylglyceryl transferase (343 aa).

The next 4 membrane-spanning stretches (helical) occupy residues 22–42 (IPIRAYALCIIAGIVAALIIG), 54–74 (GVIYDIALWAVPFGLVGGRLY), 97–117 (VWEGGLGIWGAVALGGVGAWI), and 123–143 (GIPLPAFADAIAPGIVLAQAI). Arg145 contributes to the a 1,2-diacyl-sn-glycero-3-phospho-(1'-sn-glycerol) binding site. Helical transmembrane passes span 193-213 (VVHPTFLYELLWNVLVFVLLI) and 257-277 (VNSFTSTLVFVGAVAYILLAP). The interval 283–343 (PATLGGTPSS…SADNSGIVEK (61 aa)) is disordered. Residues 295-325 (GGDDTAETEATADTEDTEDTEDGVTDAPEAD) show a composition bias toward acidic residues.

This sequence belongs to the Lgt family.

It is found in the cell membrane. It catalyses the reaction L-cysteinyl-[prolipoprotein] + a 1,2-diacyl-sn-glycero-3-phospho-(1'-sn-glycerol) = an S-1,2-diacyl-sn-glyceryl-L-cysteinyl-[prolipoprotein] + sn-glycerol 1-phosphate + H(+). It participates in protein modification; lipoprotein biosynthesis (diacylglyceryl transfer). Functionally, catalyzes the transfer of the diacylglyceryl group from phosphatidylglycerol to the sulfhydryl group of the N-terminal cysteine of a prolipoprotein, the first step in the formation of mature lipoproteins. This is Phosphatidylglycerol--prolipoprotein diacylglyceryl transferase from Mycobacteroides abscessus (strain ATCC 19977 / DSM 44196 / CCUG 20993 / CIP 104536 / JCM 13569 / NCTC 13031 / TMC 1543 / L948) (Mycobacterium abscessus).